We begin with the raw amino-acid sequence, 887 residues long: Leucine--tRNA ligase (887 aa).

Positions 48–58 match the 'HIGH' region motif; that stretch reads PYPSGKLHMGH. The 'KMSKS' region motif lies at 644–648; sequence TMSKS. ATP is bound at residue Lys647.

This sequence belongs to the class-I aminoacyl-tRNA synthetase family.

It localises to the cytoplasm. It carries out the reaction tRNA(Leu) + L-leucine + ATP = L-leucyl-tRNA(Leu) + AMP + diphosphate. The sequence is that of Leucine--tRNA ligase from Leptothrix cholodnii (strain ATCC 51168 / LMG 8142 / SP-6) (Leptothrix discophora (strain SP-6)).